We begin with the raw amino-acid sequence, 493 residues long: Aluminum-activated malate transporter 1 (493 aa).

The next 5 membrane-spanning stretches (helical) occupy residues 28–48 (VGLALVLVSSFYYYQPFGPFT), 51–71 (FGINAMWAVMTVVVVFEFSVG), 104–124 (TVEPILLVMLVFVQAALSTFV), 133–153 (KFDYGILIFILTFALISLSGF), and 169–189 (VVIGGVSCILISIFVCPVWAG). Phosphoserine occurs at positions 320 and 327. T385 carries the post-translational modification Phosphothreonine. The segment covering 441 to 452 (DNDRSNNVDDSR) has biased composition (basic and acidic residues). Positions 441–460 (DNDRSNNVDDSRGGSSQDSC) are disordered.

This sequence belongs to the aromatic acid exporter (TC 2.A.85) family. Post-translationally, phosphorylated. A reversible phosphorylation is required for activation. In terms of tissue distribution, expressed in roots, but not in shoots. Detected in the root apex in absence of aluminum stress and in root apices, the stele and endodermis of the elongating zone of primary and lateral roots after aluminum stress. Not expressed in cortical and epidermal cells.

Its subcellular location is the cell membrane. Activated by external aluminum. Malate transporter critical for aluminum tolerance. The STOP1 transcription factor is required for ALMT1 expression. This is Aluminum-activated malate transporter 1 (ALMT1) from Arabidopsis thaliana (Mouse-ear cress).